The sequence spans 89 residues: Small ribosomal subunit protein uS15 (89 aa).

Basic and acidic residues predominate over residues 1-21 (MSLHQERKSELVSKFRTHESD). Residues 1–25 (MSLHQERKSELVSKFRTHESDTGSP) form a disordered region.

Belongs to the universal ribosomal protein uS15 family. Part of the 30S ribosomal subunit. Forms a bridge to the 50S subunit in the 70S ribosome, contacting the 23S rRNA.

One of the primary rRNA binding proteins, it binds directly to 16S rRNA where it helps nucleate assembly of the platform of the 30S subunit by binding and bridging several RNA helices of the 16S rRNA. In terms of biological role, forms an intersubunit bridge (bridge B4) with the 23S rRNA of the 50S subunit in the ribosome. The protein is Small ribosomal subunit protein uS15 of Myxococcus xanthus (strain DK1622).